The primary structure comprises 269 residues: Chymotrypsin-like elastase family member 2A (269 aa).

A signal peptide spans 1 to 16; it reads MIRALLLSTLVAGALS. The propeptide at 17–28 is activation peptide; it reads CGVPTYPPQLSR. Residues 29 to 267 form the Peptidase S1 domain; that stretch reads VVGGEDARPN…YNDWISSVIE (239 aa). Cys-58 and Cys-74 are joined by a disulfide. Residues His-73 and Asp-121 each act as charge relay system in the active site. Intrachain disulfides connect Cys-155/Cys-222, Cys-186/Cys-202, and Cys-212/Cys-243. Ser-216 serves as the catalytic Charge relay system.

The protein belongs to the peptidase S1 family. Elastase subfamily. Interacts with CPA1. Interacts with SERPINA1. As to expression, pancreas.

Its subcellular location is the secreted. It carries out the reaction Preferential cleavage: Leu-|-Xaa, Met-|-Xaa and Phe-|-Xaa. Hydrolyzes elastin.. Elastase that enhances insulin signaling and might have a physiologic role in cellular glucose metabolism. Circulates in plasma and reduces platelet hyperactivation, triggers both insulin secretion and degradation, and increases insulin sensitivity. The sequence is that of Chymotrypsin-like elastase family member 2A (CELA2A) from Bos taurus (Bovine).